The following is a 119-amino-acid chain: DNA-binding protein inhibitor ID-3 (119 aa).

One can recognise a bHLH domain in the interval 28–80; the sequence is RGKSPSTEEPLSLLDDMNHCYSRLRELVPGVPRGTQLSQVEILQRVIDYILDL. An interaction with IFI204 region spans residues 35 to 87; sequence EEPLSLLDDMNHCYSRLRELVPGVPRGTQLSQVEILQRVIDYILDLQVVLAEP.

As to quaternary structure, homodimer, and heterodimer with other HLH proteins. Interacts with CLOCK and BMAL1. Interacts with COPS5 and COPS7A. Interacts with IFI204. Interacts with GATA4 and NKX2-5. Interacts with ANKRD2; both proteins cooperate in myoblast differentiation. In terms of processing, polyubiquitinated; which is favored by Ifi204 and leads to proteasomal degradation. Expressed by myoblasts (at protein level).

It is found in the nucleus. The protein resides in the cytoplasm. Functionally, transcriptional regulator (lacking a basic DNA binding domain) which negatively regulates the basic helix-loop-helix (bHLH) transcription factors by forming heterodimers and inhibiting their DNA binding and transcriptional activity. Implicated in regulating a variety of cellular processes, including cellular growth, senescence, differentiation, apoptosis, angiogenesis, and neoplastic transformation. Involved in myogenesis by inhibiting skeletal muscle and cardiac myocyte differentiation and promoting muscle precursor cells proliferation. Inhibits the binding of E2A-containing protein complexes to muscle creatine kinase E-box enhancer. Regulates the circadian clock by repressing the transcriptional activator activity of the CLOCK-BMAL1 heterodimer. The protein is DNA-binding protein inhibitor ID-3 (Id3) of Mus musculus (Mouse).